The sequence spans 312 residues: DNA-directed RNA polymerase subunit alpha (312 aa).

The interval 1–229 (MLQYQIDRIE…ELFQPLATVT (229 aa)) is alpha N-terminal domain (alpha-NTD). The alpha C-terminal domain (alpha-CTD) stretch occupies residues 239–312 (EPSAEAQIPL…ISIPQSRTSA (74 aa)).

Belongs to the RNA polymerase alpha chain family. In cyanobacteria the RNAP catalytic core is composed of 2 alpha, 1 beta, 1 beta', 1 gamma and 1 omega subunit. When a sigma factor is associated with the core the holoenzyme is formed, which can initiate transcription.

It carries out the reaction RNA(n) + a ribonucleoside 5'-triphosphate = RNA(n+1) + diphosphate. Functionally, DNA-dependent RNA polymerase catalyzes the transcription of DNA into RNA using the four ribonucleoside triphosphates as substrates. The chain is DNA-directed RNA polymerase subunit alpha from Synechococcus sp. (strain CC9605).